Consider the following 301-residue polypeptide: E3 ubiquitin-protein ligase DIS1 (301 aa).

The RING-type; degenerate zinc finger occupies 53–89 (CPVCLSAMYPPIHQCSNGHTLCSGCKPRVHNRCPTCR). The segment at 106–166 (SLELPCKYQN…LVNHLKDDHK (61 aa)) adopts an SIAH-type; degenerate zinc-finger fold.

This sequence belongs to the SINA (Seven in absentia) family. Homodimer. Interacts with NEK6. Interacts with SKIPA.

The protein resides in the nucleus. The protein localises to the cytoplasm. It carries out the reaction S-ubiquitinyl-[E2 ubiquitin-conjugating enzyme]-L-cysteine + [acceptor protein]-L-lysine = [E2 ubiquitin-conjugating enzyme]-L-cysteine + N(6)-ubiquitinyl-[acceptor protein]-L-lysine.. The protein operates within protein modification; protein ubiquitination. In terms of biological role, E3 ubiquitin-protein ligase that mediates ubiquitination and subsequent proteasomal degradation of target proteins. E3 ubiquitin ligases accept ubiquitin from an E2 ubiquitin-conjugating enzyme in the form of a thioester and then directly transfers the ubiquitin to targeted substrates. Plays a negative role in drought stress tolerance through transcriptional and post-translational regulation of diverse stress-related genes. Interacts with the serine/threonine-protein kinase NEK6 and promotes its degradation via the 26S proteasome-dependent pathway. The sequence is that of E3 ubiquitin-protein ligase DIS1 from Oryza sativa subsp. japonica (Rice).